Consider the following 250-residue polypeptide: 2,3-bisphosphoglycerate-dependent phosphoglycerate mutase (250 aa).

Residues 10–17, 23–24, Arg62, 89–92, Lys100, 116–117, and 185–186 contribute to the substrate site; these read RHGESQWN, TG, ERHY, RR, and GN. The active-site Tele-phosphohistidine intermediate is the His11. Glu89 acts as the Proton donor/acceptor in catalysis.

This sequence belongs to the phosphoglycerate mutase family. BPG-dependent PGAM subfamily. As to quaternary structure, homodimer.

The enzyme catalyses (2R)-2-phosphoglycerate = (2R)-3-phosphoglycerate. The protein operates within carbohydrate degradation; glycolysis; pyruvate from D-glyceraldehyde 3-phosphate: step 3/5. Catalyzes the interconversion of 2-phosphoglycerate and 3-phosphoglycerate. This chain is 2,3-bisphosphoglycerate-dependent phosphoglycerate mutase, found in Pectobacterium carotovorum subsp. carotovorum (strain PC1).